Here is a 283-residue protein sequence, read N- to C-terminus: Myeloid differentiation primary response protein MyD88-B (283 aa).

The region spanning 27 to 105 (RLCLYLNPNA…DILTDLAPLI (79 aa)) is the Death domain. Positions 106-143 (EADCKKYLEKKHGPLPLQDDNVDSSEQYRITKSDDPYG) are intermediate domain. Positions 147 to 281 (ETFDAFICCC…WFWDKLAKAL (135 aa)) constitute a TIR domain.

The protein resides in the cytoplasm. Its function is as follows. Adapter protein involved in the Toll-like receptor and IL-1 receptor signaling pathway in the innate immune response. Activates expression of target genes in the Spemann organizer region during early embryonic development. Is required for normal axis formation. This Xenopus laevis (African clawed frog) protein is Myeloid differentiation primary response protein MyD88-B (myd88-b).